Consider the following 901-residue polypeptide: Protein translocase subunit SecA (901 aa).

ATP contacts are provided by residues Q87, G105–T109, and D512. The interval H859–Q901 is disordered. C885, C887, C896, and H897 together coordinate Zn(2+). Basic residues predominate over residues K891–Q901.

Belongs to the SecA family. As to quaternary structure, monomer and homodimer. Part of the essential Sec protein translocation apparatus which comprises SecA, SecYEG and auxiliary proteins SecDF-YajC and YidC. Zn(2+) serves as cofactor.

Its subcellular location is the cell inner membrane. It is found in the cytoplasm. It catalyses the reaction ATP + H2O + cellular proteinSide 1 = ADP + phosphate + cellular proteinSide 2.. In terms of biological role, part of the Sec protein translocase complex. Interacts with the SecYEG preprotein conducting channel. Has a central role in coupling the hydrolysis of ATP to the transfer of proteins into and across the cell membrane, serving both as a receptor for the preprotein-SecB complex and as an ATP-driven molecular motor driving the stepwise translocation of polypeptide chains across the membrane. The sequence is that of Protein translocase subunit SecA from Escherichia coli O6:K15:H31 (strain 536 / UPEC).